The chain runs to 377 residues: UPF0754 membrane protein BPUM_0927 (377 aa).

The next 2 helical transmembrane spans lie at 1-21 (MNIFTTFLFMIVIGAVIGAAT) and 357-377 (FLGGFLGGLIGAIQAIFVTLF).

This sequence belongs to the UPF0754 family.

The protein localises to the cell membrane. In Bacillus pumilus (strain SAFR-032), this protein is UPF0754 membrane protein BPUM_0927.